Here is a 96-residue protein sequence, read N- to C-terminus: Protein Vpr (96 aa).

The tract at residues 1-42 (MEQAPEDQGPQREPYNEWTLELLEELKNEAVRHFPRIWLHSL) is homooligomerization. Phosphoserine; by host occurs at positions 79, 94, and 96.

Belongs to the HIV-1 VPR protein family. Homooligomer, may form homodimer. Interacts with p6-gag region of the Pr55 Gag precursor protein through a (Leu-X-X)4 motif near the C-terminus of the P6gag protein. Interacts with host UNG. May interact with host RAD23A/HHR23A. Interacts with host VPRBP/DCAF1, leading to hijack the CUL4A-RBX1-DDB1-DCAF1/VPRBP complex, mediating ubiquitination of host proteins such as TERT and ZGPAT and arrest of the cell cycle in G2 phase. Post-translationally, phosphorylated on several residues by host. These phosphorylations regulate VPR activity for the nuclear import of the HIV-1 pre-integration complex.

It is found in the virion. The protein localises to the host nucleus. The protein resides in the host extracellular space. Functionally, during virus replication, may deplete host UNG protein, and incude G2-M cell cycle arrest. Acts by targeting specific host proteins for degradation by the 26S proteasome, through association with the cellular CUL4A-DDB1 E3 ligase complex by direct interaction with host VPRPB/DCAF-1. Cell cycle arrest reportedly occurs within hours of infection and is not blocked by antiviral agents, suggesting that it is initiated by the VPR carried into the virion. Additionally, VPR induces apoptosis in a cell cycle dependent manner suggesting that these two effects are mechanistically linked. Detected in the serum and cerebrospinal fluid of AIDS patient, VPR may also induce cell death to bystander cells. During virus entry, plays a role in the transport of the viral pre-integration (PIC) complex to the host nucleus. This function is crucial for viral infection of non-dividing macrophages. May act directly at the nuclear pore complex, by binding nucleoporins phenylalanine-glycine (FG)-repeat regions. The sequence is that of Protein Vpr from Homo sapiens (Human).